Here is a 251-residue protein sequence, read N- to C-terminus: Ribosomal RNA small subunit methyltransferase G (251 aa).

S-adenosyl-L-methionine is bound by residues Gly-74, Phe-79, 125 to 126, and Arg-144; that span reads AE. The tract at residues 224-251 is disordered; it reads RPAGLPTQHPLGAIEGAPRVESEEPEEP.

It belongs to the methyltransferase superfamily. RNA methyltransferase RsmG family.

The protein localises to the cytoplasm. Specifically methylates the N7 position of a guanine in 16S rRNA. The chain is Ribosomal RNA small subunit methyltransferase G from Gloeobacter violaceus (strain ATCC 29082 / PCC 7421).